The chain runs to 314 residues: Ferrochelatase (314 aa).

2 residues coordinate Fe cation: histidine 188 and glutamate 269.

Belongs to the ferrochelatase family.

It localises to the cytoplasm. The catalysed reaction is heme b + 2 H(+) = protoporphyrin IX + Fe(2+). The protein operates within porphyrin-containing compound metabolism; protoheme biosynthesis; protoheme from protoporphyrin-IX: step 1/1. Its function is as follows. Catalyzes the ferrous insertion into protoporphyrin IX. This Campylobacter fetus subsp. fetus (strain 82-40) protein is Ferrochelatase.